The following is a 343-amino-acid chain: N-acetyl-gamma-glutamyl-phosphate reductase (343 aa).

Cys149 is an active-site residue.

Belongs to the NAGSA dehydrogenase family. Type 1 subfamily.

The protein resides in the cytoplasm. The enzyme catalyses N-acetyl-L-glutamate 5-semialdehyde + phosphate + NADP(+) = N-acetyl-L-glutamyl 5-phosphate + NADPH + H(+). The protein operates within amino-acid biosynthesis; L-arginine biosynthesis; N(2)-acetyl-L-ornithine from L-glutamate: step 3/4. Its function is as follows. Catalyzes the NADPH-dependent reduction of N-acetyl-5-glutamyl phosphate to yield N-acetyl-L-glutamate 5-semialdehyde. This chain is N-acetyl-gamma-glutamyl-phosphate reductase, found in Exiguobacterium sibiricum (strain DSM 17290 / CCUG 55495 / CIP 109462 / JCM 13490 / 255-15).